Consider the following 469-residue polypeptide: MEFSSHHIRLLQQLDEQRRRDLFCDCHIIVEGQMFKAHRNVLFASSGYFKMLLSQSCRDMGEPITATFDVFSADTFTAILDFVYSGKLPLSGQNVIEVMSAASYLQMTDVIGVCKMFIKSSLDINEKDRDGFFSLSDKDTDSNGSGLYAAGWRTESSPTHTHKTTEHGSFIAGYNYPPPISSRLQHPFSKSPRKPELVRKHRRRLLPEALTPALSHIPLGDLVGGSTECMLHDEETVESVSQEEERTQTQVSIISIKVEDLDATSNSWPESPPQESLDQGSALHITKAEELYKAMPTILGGVSGWGEDELSSGRFKCPFCTHTVKRKADLKRHLRCHTGERPYPCEACGKRFTRLEHLRNHFQTIHEAGKLICRRCKLPVTKVTGRVIQDGTRRYRLCQACLAEAGLDNVNFDYGEDQPLVLPPENEREHCWNFKEEGRQENGSEAAESDLVIQEVVDSEEDELKQKQD.

The BTB domain maps to 24–92; it reads CDCHIIVEGQ…VYSGKLPLSG (69 aa). C2H2-type zinc fingers lie at residues 315–337 and 343–366; these read FKCPFCTHTVKRKADLKRHLRCH and YPCEACGKRFTRLEHLRNHFQTIH.

It is found in the nucleus. May be involved in transcriptional regulation. The sequence is that of Zinc finger and BTB domain-containing protein 8A.1-B (zbtb8a.1-b) from Xenopus laevis (African clawed frog).